We begin with the raw amino-acid sequence, 289 residues long: Nodulation protein NolT (289 aa).

The first 33 residues, 1 to 33 (MFGSAHGDTTSSDTSGRRPLRLVVLPLLLALSS), serve as a signal peptide directing secretion. The N-palmitoyl cysteine moiety is linked to residue Cys-34. Cys-34 carries the S-diacylglycerol cysteine lipid modification. A helical transmembrane segment spans residues 233-253 (VAVGVGAAVFAVTCYLLFIVL).

Belongs to the YscJ lipoprotein family.

The protein localises to the cell outer membrane. In terms of biological role, regulates cultivar-specific nodulation of soybean. This chain is Nodulation protein NolT (nolT), found in Rhizobium fredii (Sinorhizobium fredii).